A 55-amino-acid polypeptide reads, in one-letter code: Large ribosomal subunit protein bL33 (55 aa).

Belongs to the bacterial ribosomal protein bL33 family.

This chain is Large ribosomal subunit protein bL33, found in Roseobacter denitrificans (strain ATCC 33942 / OCh 114) (Erythrobacter sp. (strain OCh 114)).